The sequence spans 362 residues: tRNA-specific 2-thiouridylase MnmA 3 (362 aa).

ATP is bound by residues 11–18 and M37; that span reads GMSGGIDS. C91 functions as the Nucleophile in the catalytic mechanism. C91 and C188 are joined by a disulfide. G115 is a binding site for ATP. The interaction with tRNA stretch occupies residues 137–139; it reads KDQ. Catalysis depends on C188, which acts as the Cysteine persulfide intermediate. Residues 296-297 form an interaction with tRNA region; the sequence is RY.

Belongs to the MnmA/TRMU family.

It is found in the cytoplasm. It catalyses the reaction S-sulfanyl-L-cysteinyl-[protein] + uridine(34) in tRNA + AH2 + ATP = 2-thiouridine(34) in tRNA + L-cysteinyl-[protein] + A + AMP + diphosphate + H(+). Catalyzes the 2-thiolation of uridine at the wobble position (U34) of tRNA, leading to the formation of s(2)U34. In Bacteroides fragilis (strain ATCC 25285 / DSM 2151 / CCUG 4856 / JCM 11019 / LMG 10263 / NCTC 9343 / Onslow / VPI 2553 / EN-2), this protein is tRNA-specific 2-thiouridylase MnmA 3.